The sequence spans 91 residues: Large ribosomal subunit protein bL31B (91 aa).

The protein belongs to the bacterial ribosomal protein bL31 family. Type B subfamily. As to quaternary structure, part of the 50S ribosomal subunit.

This is Large ribosomal subunit protein bL31B from Neisseria meningitidis serogroup A / serotype 4A (strain DSM 15465 / Z2491).